Here is a 109-residue protein sequence, read N- to C-terminus: Aquaporin-2 (109 aa).

Over 1-6 the chain is Cytoplasmic; sequence SIAFSR. The chain crosses the membrane as a helical span at residues 7 to 27; the sequence is AVFTEFLATLLFVFFGLGSAL. Residues 28 to 35 lie on the Extracellular side of the membrane; that stretch reads NWPQALPS. Residues 36 to 54 traverse the membrane as a helical segment; it reads VLQIAMAFGLAIGTLVQML. The Cytoplasmic segment spans residues 55–59; it reads GHISG. An intramembrane region (discontinuously helical) is located at residues 60 to 69; the sequence is AHINPAVTVA. Positions 63–65 match the NPA 1 motif; sequence NPA. Topologically, residues 70 to 80 are cytoplasmic; it reads CLVGCHISFLR. Residues 81 to 102 traverse the membrane as a helical segment; it reads AAFYVAAQLLGAVAGAALLHEV. At 103–109 the chain is on the extracellular side; sequence TPPSIRG.

This sequence belongs to the MIP/aquaporin (TC 1.A.8) family. As to quaternary structure, homotetramer. Serine phosphorylation is necessary and sufficient for expression at the apical membrane. Endocytosis is not phosphorylation-dependent. Post-translationally, N-glycosylated.

It localises to the apical cell membrane. The protein localises to the basolateral cell membrane. The protein resides in the cell membrane. Its subcellular location is the cytoplasmic vesicle membrane. It is found in the golgi apparatus. It localises to the trans-Golgi network membrane. The catalysed reaction is H2O(in) = H2O(out). It catalyses the reaction glycerol(in) = glycerol(out). Functionally, forms a water-specific channel that provides the plasma membranes of renal collecting duct with high permeability to water, thereby permitting water to move in the direction of an osmotic gradient. Plays an essential role in renal water homeostasis. Could also be permeable to glycerol. In Erinaceus europaeus (Western European hedgehog), this protein is Aquaporin-2.